Here is a 374-residue protein sequence, read N- to C-terminus: Quinolinate synthase (374 aa).

Positions 53 and 70 each coordinate iminosuccinate. Residue Cys116 participates in [4Fe-4S] cluster binding. Iminosuccinate is bound by residues Tyr148–Asn150 and Ser169. Residue Cys236 coordinates [4Fe-4S] cluster. Iminosuccinate-binding positions include His262–Glu264 and Thr279. Cys327 contacts [4Fe-4S] cluster.

Belongs to the quinolinate synthase family. Type 3 subfamily. [4Fe-4S] cluster is required as a cofactor.

The protein localises to the cytoplasm. It catalyses the reaction iminosuccinate + dihydroxyacetone phosphate = quinolinate + phosphate + 2 H2O + H(+). It participates in cofactor biosynthesis; NAD(+) biosynthesis; quinolinate from iminoaspartate: step 1/1. Catalyzes the condensation of iminoaspartate with dihydroxyacetone phosphate to form quinolinate. The protein is Quinolinate synthase of Haloarcula marismortui (strain ATCC 43049 / DSM 3752 / JCM 8966 / VKM B-1809) (Halobacterium marismortui).